The chain runs to 171 residues: Large ribosomal subunit protein uL10 (171 aa).

Belongs to the universal ribosomal protein uL10 family. As to quaternary structure, part of the ribosomal stalk of the 50S ribosomal subunit. The N-terminus interacts with L11 and the large rRNA to form the base of the stalk. The C-terminus forms an elongated spine to which L12 dimers bind in a sequential fashion forming a multimeric L10(L12)X complex.

Its function is as follows. Forms part of the ribosomal stalk, playing a central role in the interaction of the ribosome with GTP-bound translation factors. The chain is Large ribosomal subunit protein uL10 (rplJ) from Lactococcus lactis subsp. lactis (strain IL1403) (Streptococcus lactis).